Consider the following 415-residue polypeptide: Acrosin (415 aa).

Residues 1–16 (MLPTAVLLVLAVSVAA) form the signal peptide. An N-linked (GlcNAc...) asparagine glycan is attached at asparagine 19. Disulfide bonds link cysteine 22–cysteine 152, cysteine 26–cysteine 160, cysteine 71–cysteine 87, cysteine 175–cysteine 244, cysteine 207–cysteine 223, and cysteine 234–cysteine 264. The Peptidase S1 domain occupies 40-288 (VVGGMSAEPG…YLNWIASKIG (249 aa)). Catalysis depends on charge relay system residues histidine 86 and aspartate 140. An N-linked (GlcNAc...) asparagine glycan is attached at asparagine 208. Serine 238 serves as the catalytic Charge relay system. Disordered regions lie at residues 296 to 376 (QLGT…PPQA) and 395 to 415 (FSSG…LPAS). Pro residues-rich tracts occupy residues 300-312 (PPRP…PVRP) and 328-367 (PPGP…PPPQ). Positions 339–415 (PRPPAPPPAP…TTDLQELPAS (77 aa)) are cleaved as a propeptide — pro-rich. Positions 395-409 (FSSGRSYYETETTDL) are enriched in polar residues.

Belongs to the peptidase S1 family. As to quaternary structure, heavy chain (catalytic) and a light chain linked by two disulfide bonds. Forms a heterodimer with SERPINA5.

It carries out the reaction Preferential cleavage: Arg-|-Xaa, Lys-|-Xaa.. With respect to regulation, inhibited by SERPINA5. In terms of biological role, acrosin is the major protease of mammalian spermatozoa. It is a serine protease of trypsin-like cleavage specificity, it is synthesized in a zymogen form, proacrosin and stored in the acrosome. The chain is Acrosin (ACR) from Sus scrofa (Pig).